The chain runs to 377 residues: Phospho-N-acetylmuramoyl-pentapeptide-transferase (377 aa).

Transmembrane regions (helical) follow at residues 2–22 (IQLL…TPAL), 55–75 (VAIL…SVLA), 82–102 (ITLS…VGFL), 122–142 (MVLQ…FPDA), 162–182 (LAFA…NLIA), 195–215 (LDGL…LITL), 236–256 (PMDL…FLWW), 263–283 (IFMG…FAVL), 288–308 (LLLV…ILQV), and 343–363 (FWVI…GDWL).

It belongs to the glycosyltransferase 4 family. MraY subfamily. Mg(2+) is required as a cofactor.

The protein resides in the cell membrane. The catalysed reaction is UDP-N-acetyl-alpha-D-muramoyl-L-alanyl-gamma-D-glutamyl-meso-2,6-diaminopimeloyl-D-alanyl-D-alanine + di-trans,octa-cis-undecaprenyl phosphate = di-trans,octa-cis-undecaprenyl diphospho-N-acetyl-alpha-D-muramoyl-L-alanyl-D-glutamyl-meso-2,6-diaminopimeloyl-D-alanyl-D-alanine + UMP. It participates in cell wall biogenesis; peptidoglycan biosynthesis. Functionally, catalyzes the initial step of the lipid cycle reactions in the biosynthesis of the cell wall peptidoglycan: transfers peptidoglycan precursor phospho-MurNAc-pentapeptide from UDP-MurNAc-pentapeptide onto the lipid carrier undecaprenyl phosphate, yielding undecaprenyl-pyrophosphoryl-MurNAc-pentapeptide, known as lipid I. The polypeptide is Phospho-N-acetylmuramoyl-pentapeptide-transferase (Kocuria rhizophila (strain ATCC 9341 / DSM 348 / NBRC 103217 / DC2201)).